The following is an 85-amino-acid chain: Large ribosomal subunit protein bL31B (85 aa).

Belongs to the bacterial ribosomal protein bL31 family. Type B subfamily. As to quaternary structure, part of the 50S ribosomal subunit.

The sequence is that of Large ribosomal subunit protein bL31B from Staphylococcus saprophyticus subsp. saprophyticus (strain ATCC 15305 / DSM 20229 / NCIMB 8711 / NCTC 7292 / S-41).